A 274-amino-acid chain; its full sequence is Bis(5'-nucleosyl)-tetraphosphatase, symmetrical (274 aa).

It belongs to the Ap4A hydrolase family.

It carries out the reaction P(1),P(4)-bis(5'-adenosyl) tetraphosphate + H2O = 2 ADP + 2 H(+). Hydrolyzes diadenosine 5',5'''-P1,P4-tetraphosphate to yield ADP. This Shewanella baltica (strain OS223) protein is Bis(5'-nucleosyl)-tetraphosphatase, symmetrical.